The sequence spans 307 residues: Ribosomal RNA large subunit methyltransferase F (307 aa).

The protein belongs to the methyltransferase superfamily. METTL16/RlmF family.

Its subcellular location is the cytoplasm. The enzyme catalyses adenosine(1618) in 23S rRNA + S-adenosyl-L-methionine = N(6)-methyladenosine(1618) in 23S rRNA + S-adenosyl-L-homocysteine + H(+). In terms of biological role, specifically methylates the adenine in position 1618 of 23S rRNA. The polypeptide is Ribosomal RNA large subunit methyltransferase F (Bacteroides thetaiotaomicron (strain ATCC 29148 / DSM 2079 / JCM 5827 / CCUG 10774 / NCTC 10582 / VPI-5482 / E50)).